Consider the following 199-residue polypeptide: Peroxynitrite isomerase (199 aa).

The short motif at 21–27 is the GXWXGXG element; it reads GEWEGRG. Residue His-190 participates in heme b binding.

Belongs to the nitrobindin family. As to quaternary structure, homodimer. Heme b is required as a cofactor.

The enzyme catalyses peroxynitrite = nitrate. It participates in nitrogen metabolism. Its function is as follows. Heme-binding protein able to scavenge peroxynitrite and to protect free L-tyrosine against peroxynitrite-mediated nitration, by acting as a peroxynitrite isomerase that converts peroxynitrite to nitrate. Therefore, this protein likely plays a role in peroxynitrite sensing and in the detoxification of reactive nitrogen and oxygen species (RNS and ROS, respectively). Is able to bind nitric oxide (NO) in vitro, but may act as a sensor of peroxynitrite levels in vivo. This is Peroxynitrite isomerase from Paenarthrobacter aurescens (strain TC1).